The chain runs to 339 residues: MVIQRNWQSLIKPEKLDVEPGNEPSRIATIVAEPLERGFGMTLGNAIRRILLSSLQGAAVTAVQIDGVLHEFSSVAGVREDVTDIVLNIKQLALRMHGEGPKRMMLTATGPGEVTAGQIQAGHDIEIMNPDLVLCTLDDGVKLGMEFTVNLGKGYVPASQNRQEDSPIGLIPIDAIYSPVRRVSYKVEPTRVGQVTDYDKLLLTVETNGAVTPEDSVALAARILQDQLQLFINFEEPQQVRHDEPQDDLPFNRNLLRKVDELELSVRSANCLKNDNIVYIGDLVQKSEQEMLRTPNFGRKSLNEIKEVLANMGLSLGMSVSGWPPENIEDLAKRLEEPF.

An alpha N-terminal domain (alpha-NTD) region spans residues 1–235 (MVIQRNWQSL…DQLQLFINFE (235 aa)). The tract at residues 251–339 (FNRNLLRKVD…DLAKRLEEPF (89 aa)) is alpha C-terminal domain (alpha-CTD).

This sequence belongs to the RNA polymerase alpha chain family. In terms of assembly, homodimer. The RNAP catalytic core consists of 2 alpha, 1 beta, 1 beta' and 1 omega subunit. When a sigma factor is associated with the core the holoenzyme is formed, which can initiate transcription.

It catalyses the reaction RNA(n) + a ribonucleoside 5'-triphosphate = RNA(n+1) + diphosphate. Its function is as follows. DNA-dependent RNA polymerase catalyzes the transcription of DNA into RNA using the four ribonucleoside triphosphates as substrates. In Granulibacter bethesdensis (strain ATCC BAA-1260 / CGDNIH1), this protein is DNA-directed RNA polymerase subunit alpha.